The following is a 369-amino-acid chain: Phospho-N-acetylmuramoyl-pentapeptide-transferase (369 aa).

Helical transmembrane passes span 13–33 (ISGIGLASSLAAGLGIAALTL), 49–69 (LPLLLCTIASAIAGYFVVPLL), 95–115 (MGGIFFIPVAVVGACVLSNFA), 119–139 (LAVSALTLSYGLIGWIDDWQI), 154–174 (LALQIGFAAAFCLWLMFNQPA), 183–203 (WVSFALPLGFLFWPLAGFVLV), 215–235 (IDGLAGGTVAIALLALGAIVA), 237–257 (TSPALMVFCAALSGSCLGFLA), 281–301 (AVALLTNSLVALFILSGIFFV), and 346–366 (VVSSFYVIAAILAAICLAIAS).

This sequence belongs to the glycosyltransferase 4 family. MraY subfamily. The cofactor is Mg(2+).

The protein resides in the cell inner membrane. It carries out the reaction UDP-N-acetyl-alpha-D-muramoyl-L-alanyl-gamma-D-glutamyl-meso-2,6-diaminopimeloyl-D-alanyl-D-alanine + di-trans,octa-cis-undecaprenyl phosphate = di-trans,octa-cis-undecaprenyl diphospho-N-acetyl-alpha-D-muramoyl-L-alanyl-D-glutamyl-meso-2,6-diaminopimeloyl-D-alanyl-D-alanine + UMP. It participates in cell wall biogenesis; peptidoglycan biosynthesis. Functionally, catalyzes the initial step of the lipid cycle reactions in the biosynthesis of the cell wall peptidoglycan: transfers peptidoglycan precursor phospho-MurNAc-pentapeptide from UDP-MurNAc-pentapeptide onto the lipid carrier undecaprenyl phosphate, yielding undecaprenyl-pyrophosphoryl-MurNAc-pentapeptide, known as lipid I. The protein is Phospho-N-acetylmuramoyl-pentapeptide-transferase of Nostoc sp. (strain PCC 7120 / SAG 25.82 / UTEX 2576).